The chain runs to 360 residues: Heme A synthase (360 aa).

8 consecutive transmembrane segments (helical) span residues 29–49 (WLFL…ATRL), 111–131 (FLGR…WWTG), 139–159 (LGLV…WIMV), 175–195 (LAAH…LAAG), 210–230 (LTAL…GLVA), 269–289 (VALV…LALL), 309–329 (ALAG…LLAV), and 330–350 (PLWA…MAVA). Histidine 276 provides a ligand contact to heme. Histidine 337 provides a ligand contact to heme.

This sequence belongs to the COX15/CtaA family. Type 2 subfamily. Interacts with CtaB. Heme b is required as a cofactor.

The protein localises to the cell membrane. It catalyses the reaction Fe(II)-heme o + 2 A + H2O = Fe(II)-heme a + 2 AH2. Its pathway is porphyrin-containing compound metabolism; heme A biosynthesis; heme A from heme O: step 1/1. Catalyzes the conversion of heme O to heme A by two successive hydroxylations of the methyl group at C8. The first hydroxylation forms heme I, the second hydroxylation results in an unstable dihydroxymethyl group, which spontaneously dehydrates, resulting in the formyl group of heme A. In Methylobacterium sp. (strain 4-46), this protein is Heme A synthase.